The primary structure comprises 930 residues: Isoleucine--tRNA ligase (930 aa).

The interval 1-21 (MRVKDTLNLGKTKFPMRGRLP) is disordered. A 'HIGH' region motif is present at residues 57–67 (PYANGPIHIGH). Residue Glu-555 participates in L-isoleucyl-5'-AMP binding. The short motif at 596–600 (KMSKS) is the 'KMSKS' region element. ATP is bound at residue Lys-599. 4 residues coordinate Zn(2+): Cys-889, Cys-892, Cys-909, and Cys-912.

Belongs to the class-I aminoacyl-tRNA synthetase family. IleS type 1 subfamily. In terms of assembly, monomer. It depends on Zn(2+) as a cofactor.

The protein localises to the cytoplasm. It catalyses the reaction tRNA(Ile) + L-isoleucine + ATP = L-isoleucyl-tRNA(Ile) + AMP + diphosphate. Functionally, catalyzes the attachment of isoleucine to tRNA(Ile). As IleRS can inadvertently accommodate and process structurally similar amino acids such as valine, to avoid such errors it has two additional distinct tRNA(Ile)-dependent editing activities. One activity is designated as 'pretransfer' editing and involves the hydrolysis of activated Val-AMP. The other activity is designated 'posttransfer' editing and involves deacylation of mischarged Val-tRNA(Ile). This chain is Isoleucine--tRNA ligase, found in Limosilactobacillus fermentum (strain NBRC 3956 / LMG 18251) (Lactobacillus fermentum).